A 246-amino-acid polypeptide reads, in one-letter code: Thaumatin-like protein 1a (246 aa).

The N-terminal stretch at 1–24 is a signal peptide; the sequence is MMKSQVASLLGLTLAILFFSGAHA. 8 cysteine pairs are disulfide-bonded: Cys33–Cys245, Cys81–Cys91, Cys96–Cys103, Cys151–Cys234, Cys156–Cys217, Cys164–Cys180, Cys184–Cys193, and Cys194–Cys204.

This sequence belongs to the thaumatin family.

It is found in the secreted. The sequence is that of Thaumatin-like protein 1a (TL1) from Malus domestica (Apple).